Consider the following 502-residue polypeptide: Glycogen synthase (502 aa).

Lys24 is an ADP-alpha-D-glucose binding site.

This sequence belongs to the glycosyltransferase 1 family. Bacterial/plant glycogen synthase subfamily.

It carries out the reaction [(1-&gt;4)-alpha-D-glucosyl](n) + ADP-alpha-D-glucose = [(1-&gt;4)-alpha-D-glucosyl](n+1) + ADP + H(+). It participates in glycan biosynthesis; glycogen biosynthesis. Its function is as follows. Synthesizes alpha-1,4-glucan chains using ADP-glucose. The polypeptide is Glycogen synthase (Nitrosomonas eutropha (strain DSM 101675 / C91 / Nm57)).